A 229-amino-acid polypeptide reads, in one-letter code: Lipoprotein-releasing system ATP-binding protein LolD (229 aa).

In terms of domain architecture, ABC transporter spans 6-229; that stretch reads LELDAIERTY…DGHLTPYVPA (224 aa). 42–49 lines the ATP pocket; it reads GPSGSGKS.

The protein belongs to the ABC transporter superfamily. Lipoprotein translocase (TC 3.A.1.125) family. The complex is composed of two ATP-binding proteins (LolD) and two transmembrane proteins (LolC and LolE).

It localises to the cell inner membrane. Its function is as follows. Part of the ABC transporter complex LolCDE involved in the translocation of mature outer membrane-directed lipoproteins, from the inner membrane to the periplasmic chaperone, LolA. Responsible for the formation of the LolA-lipoprotein complex in an ATP-dependent manner. The protein is Lipoprotein-releasing system ATP-binding protein LolD of Maricaulis maris (strain MCS10) (Caulobacter maris).